The sequence spans 131 residues: Ribosome-binding factor A (131 aa).

Belongs to the RbfA family. Monomer. Binds 30S ribosomal subunits, but not 50S ribosomal subunits or 70S ribosomes.

It is found in the cytoplasm. Functionally, one of several proteins that assist in the late maturation steps of the functional core of the 30S ribosomal subunit. Associates with free 30S ribosomal subunits (but not with 30S subunits that are part of 70S ribosomes or polysomes). Required for efficient processing of 16S rRNA. May interact with the 5'-terminal helix region of 16S rRNA. This chain is Ribosome-binding factor A, found in Pseudomonas fluorescens (strain SBW25).